A 392-amino-acid chain; its full sequence is Galactokinase (392 aa).

Residues Arg-37, Glu-43, His-44, and Asp-46 each contribute to the alpha-D-galactose site. The ATP site is built by Gly-136, Gly-138, Ser-140, and Ser-141. An alpha-D-galactose-binding site is contributed by Asp-186. Residue Asp-186 is the Proton acceptor of the active site. At Ser-230 the chain carries Phosphoserine. An alpha-D-galactose-binding site is contributed by Tyr-236.

Belongs to the GHMP kinase family. GalK subfamily. Homodimer.

The enzyme catalyses alpha-D-galactose + ATP = alpha-D-galactose 1-phosphate + ADP + H(+). Its pathway is carbohydrate metabolism; galactose metabolism. Functionally, catalyzes the transfer of a phosphate from ATP to alpha-D-galactose and participates in the first committed step in the catabolism of galactose. The protein is Galactokinase of Homo sapiens (Human).